Reading from the N-terminus, the 146-residue chain is DNA protection during starvation protein 2 (146 aa).

The Fe cation site is built by His-27, Asp-54, and Glu-58.

It belongs to the Dps family. As to quaternary structure, the 12 subunits form a hollow sphere into which the mineral iron core of up to 500 Fe(3+) can be deposited. Homododecamer.

The protein resides in the cytoplasm. It catalyses the reaction 2 Fe(2+) + H2O2 + 2 H(+) = 2 Fe(3+) + 2 H2O. Its function is as follows. Protects DNA from oxidative damage by sequestering intracellular Fe(2+) ion and storing it in the form of Fe(3+) oxyhydroxide mineral. One hydrogen peroxide oxidizes two Fe(2+) ions, which prevents hydroxyl radical production by the Fenton reaction. It is capable of binding and sequestering Fe(2+) ion. Does not bind DNA. This chain is DNA protection during starvation protein 2 (dps2), found in Bacillus anthracis.